The primary structure comprises 373 residues: Valienol-1-phosphate guanylyltransferase (373 aa).

Substrate-binding positions include Gly177 and 192-193 (EK).

This sequence belongs to the bacterial/plant glucose-1-phosphate adenylyltransferase family. The cofactor is Mg(2+).

It catalyses the reaction valienol 1-phosphate + GTP + H(+) = GDP-valienol + diphosphate. Its function is as follows. Involved in the biosynthesis of the antifungal agent validamycin A. Catalyzes the conversion of valienol 1-phosphate to GDP-valienol and less effectively to ADP-valienol or other NDP derivatives. The sequence is that of Valienol-1-phosphate guanylyltransferase from Streptomyces hygroscopicus subsp. limoneus.